The following is a 211-amino-acid chain: Small ribosomal subunit protein uS3 (211 aa).

The region spanning 16-85 is the KH type-2 domain; the sequence is IDEYFKGKLV…NPQIEVKPLE (70 aa).

This sequence belongs to the universal ribosomal protein uS3 family. As to quaternary structure, part of the 30S ribosomal subunit.

Binds the lower part of the 30S subunit head. The chain is Small ribosomal subunit protein uS3 from Methanococcus vannielii (strain ATCC 35089 / DSM 1224 / JCM 13029 / OCM 148 / SB).